The sequence spans 410 residues: Platelet-activating factor acetylhydrolase IB subunit beta (410 aa).

The segment at 1 to 38 (MVLSQRQRDELNRAIADYLRSNGYEEAYSVFKKEAELD) is required for self-association and interaction with PAFAH1B2 and PAFAH1B3. Residues 1–66 (MVLSQRQRDE…SVIRLQKKVM (66 aa)) are interaction with NDE1. The tract at residues 1 to 102 (MVLSQRQRDE…EWIPRPPEKY (102 aa)) is interaction with NDEL1. Residues 7–39 (QRDELNRAIADYLRSNGYEEAYSVFKKEAELDM) enclose the LisH domain. The residue at position 53 (lysine 53) is an N6-acetyllysine. Residues 56 to 82 (TSVIRLQKKVMELESKLNEAKEEFTSG) adopt a coiled-coil conformation. The tract at residues 83-410 (GPLGQKRDPK…DQTVKVWECR (328 aa)) is interaction with dynein and dynactin. WD repeat units lie at residues 106–147 (GHRS…RTLK), 148–187 (GHTD…CIRT), 190–229 (GHDH…CVKT), 232–271 (GHRE…CKAE), 274–333 (EHEH…CLMT), 336–377 (GHDN…KTLN), and 378–410 (AHEH…WECR). Residue serine 109 is modified to Phosphoserine. Residues 367–409 (YKNKRCMKTLNAHEHFVTSLDFHKTAPYVVTGSVDQTVKVWEC) are interaction with DCX. The tract at residues 388 to 410 (FHKTAPYVVTGSVDQTVKVWECR) is interaction with NDEL1.

It belongs to the WD repeat LIS1/nudF family. Can self-associate. Component of the cytosolic PAF-AH (I) heterotetrameric enzyme, which is composed of PAFAH1B1 (beta), PAFAH1B2 (alpha2) and PAFAH1B3 (alpha1) subunits. The catalytic activity of the enzyme resides in the alpha1 (PAFAH1B3) and alpha2 (PAFAH1B2) subunits, whereas the beta subunit (PAFAH1B1) has regulatory activity. Trimer formation is not essential for the catalytic activity. Interacts with the catalytic dimer of PAF-AH (I) heterotetrameric enzyme: interacts with PAFAH1B2 homodimer (alpha2/alpha2 homodimer), PAFAH1B3 homodimer (alpha1/alpha1 homodimer) and PAFAH1B2-PAFAH1B3 heterodimer (alpha2/alpha1 heterodimer). Interacts with DCX, dynein, dynactin, IQGAP1, KATNB1, NDE1, NDEL1, NUDC and RSN. Interacts with DISC1, and this interaction is enhanced by NDEL1. Interacts with DAB1 when DAB1 is phosphorylated in response to RELN/reelin signaling. Interacts with INTS13. Interacts with DCDC1.

Its subcellular location is the cytoplasm. The protein resides in the cytoskeleton. The protein localises to the microtubule organizing center. It is found in the centrosome. It localises to the spindle. Its subcellular location is the nucleus membrane. Its function is as follows. Regulatory subunit (beta subunit) of the cytosolic type I platelet-activating factor (PAF) acetylhydrolase (PAF-AH (I)), an enzyme that catalyzes the hydrolyze of the acetyl group at the sn-2 position of PAF and its analogs and participates in PAF inactivation. Regulates the PAF-AH (I) activity in a catalytic dimer composition-dependent manner. Positively regulates the activity of the minus-end directed microtubule motor protein dynein. May enhance dynein-mediated microtubule sliding by targeting dynein to the microtubule plus end. Required for several dynein- and microtubule-dependent processes such as the maintenance of Golgi integrity, the peripheral transport of microtubule fragments and the coupling of the nucleus and centrosome. Required during brain development for the proliferation of neuronal precursors and the migration of newly formed neurons from the ventricular/subventricular zone toward the cortical plate. Neuronal migration involves a process called nucleokinesis, whereby migrating cells extend an anterior process into which the nucleus subsequently translocates. During nucleokinesis dynein at the nuclear surface may translocate the nucleus towards the centrosome by exerting force on centrosomal microtubules. Also required for proper activation of Rho GTPases and actin polymerization at the leading edge of locomoting cerebellar neurons and postmigratory hippocampal neurons in response to calcium influx triggered via NMDA receptors. May also play a role in other forms of cell locomotion including the migration of fibroblasts during wound healing. Required for dynein recruitment to microtubule plus ends and BICD2-bound cargos. May modulate the Reelin pathway through interaction of the PAF-AH (I) catalytic dimer with VLDLR. This is Platelet-activating factor acetylhydrolase IB subunit beta from Felis catus (Cat).